We begin with the raw amino-acid sequence, 1171 residues long: MENNLKTCPKEDGDFVSDKIKFKIEEEDDDGIPPDSLERMDFKSEQEDMKQTDSGGERAGLGGTGCSCKPPGKYLSAESEDDYGALFSQYSSTLYDVAMEAVTQSLLSSRNMSSRKKSPAWKHFFISPRDSTKAICMYCVKEFSRGKNEKDLSTSCLMRHVRRAHPTVLIQENGSVSAVSSFPSPSLLLPPQPADAGDLSTILSPIKLVQKVASKIPSPDRITEESVSVVSSEEISSDMSVSEKCGREEALVGSSPHLPALHYDEPAENLAEKSLPLPKSTSGSRRRSAVWKHFYLSPLDNSKAVCIHCMNEFSRGKNGKDLGTSCLIRHMWRAHRAIVLQENGGTGIPPLYSTPPTLLPSLLPPEGELSSVSSSPVKPVRESPSASSSPDRLTEDLQSHLNPGDGLMEDVAAFSSSDDIGEASASSPEKQQADGLSPRLFESGAIFQQNKKVMKRLKSEVWHHFSLAPMDSLKAECRYCGCAISRGKKGDVGTSCLMRHLYRRHPEVVGSQKGFLGASLANSPYATLASAESSSSKLTDLPTVVTKNNQVMFPVNSKKTSKLWNHFSICSADSTKVVCLHCGRTISRGKKPTNLGTSCLLRHLQRFHSNVLKTEVSETARPSSPDTRVPRGTELSGASSFDDTNEKFYDSHPVAKKITSLIAEMIALDLQPYSFVDNVGFNRLLEYLKPQYSLPAPSYFSRTAIPGMYDNVKQIIMSHLKEAESGVIHFTSGIWMSNQTREYLTLTAHWVSFESPARPRCDDHHCSALLDVSQVDCDYSGNSIQKQLECWWEAWVTSTGLQVGITVTDNASIGKTLNEGEHSSVQCFSHTVNLIVSEAIKSQRMVQNLLSLARKICERVHRSPKAKEKLAELQREYALPQHHLIQDVPSKWSTSFHMLERLIEQKRAINEMSVECNFRELISCDQWEVMQSVCRALKPFEAASREMSTQMSTLSQVIPMVHILNRKVEMLFEETMGIDTMLRSLKEAMVSRLSATLHDPRYVFATLLDPRYKASLFTEEEAEQYKQDLIRELELMNSTSEDVAASHRCDAGSPSKDSAAEENLWSLVAKVKKKDPREKLPEAMVLAYLEEEVLEHSCDPLTYWNLKKASWPGLSALAVRFLGCPPSIVPSEKLFNTPTENGSLGQSRLMMEHFEKLIFLKVNLPLIYFQY.

Residues 25–62 (EEEDDDGIPPDSLERMDFKSEQEDMKQTDSGGERAGLG) form a disordered region. The segment covering 36-51 (SLERMDFKSEQEDMKQ) has biased composition (basic and acidic residues). Lys-43 is covalently cross-linked (Glycyl lysine isopeptide (Lys-Gly) (interchain with G-Cter in SUMO2)). BED-type zinc fingers lie at residues 115–172 (RKKS…LIQE) and 285–342 (RRRS…VLQE). Positions 136, 139, 160, 165, 306, 309, 330, and 335 each coordinate Zn(2+). Positions 362–385 (LLPPEGELSSVSSSPVKPVRESPS) are enriched in low complexity. The interval 362–405 (LLPPEGELSSVSSSPVKPVRESPSASSSPDRLTEDLQSHLNPGD) is disordered. BED-type zinc fingers lie at residues 456-512 (RLKS…VGSQ) and 558-615 (KKTS…LKTE). Zn(2+)-binding residues include Cys-477 and Cys-480. A Glycyl lysine isopeptide (Lys-Gly) (interchain with G-Cter in SUMO2) cross-link involves residue Lys-489. Zn(2+) is bound by residues His-500, His-505, Cys-579, Cys-582, His-603, and His-608. Residues 614–640 (TEVSETARPSSPDTRVPRGTELSGASS) are disordered. A Phosphoserine modification is found at Ser-624. The tract at residues 1086–1171 (LAYLEEEVLE…VNLPLIYFQY (86 aa)) is required for homodimerization and nuclear accumulation.

In terms of assembly, homodimer; via C-terminus. Interacts with MYH9. Interacts with SAFB/SAFB1. As to expression, expressed in testis, heart, lung, and weakly expressed in brain, liver, muscle, placenta and small intestine. Expressed in the retina, found in the cone photoreceptors, Mueller cells, cone pedicles and in the innermost retinal layer.

The protein localises to the nucleus. Its subcellular location is the cytoplasm. It localises to the photoreceptor inner segment. Transcriptional regulator that binds to poly-guanine tracts in gene promoters and activates transcription. Able to bind single- and double-stranded DNA and RNA. This Homo sapiens (Human) protein is Zinc finger BED domain-containing protein 4 (ZBED4).